The primary structure comprises 64 residues: UPF0434 protein Oant_3286 (64 aa).

This sequence belongs to the UPF0434 family.

The protein is UPF0434 protein Oant_3286 of Brucella anthropi (strain ATCC 49188 / DSM 6882 / CCUG 24695 / JCM 21032 / LMG 3331 / NBRC 15819 / NCTC 12168 / Alc 37) (Ochrobactrum anthropi).